A 189-amino-acid chain; its full sequence is dCTP deaminase (189 aa).

DCTP is bound by residues 112 to 117, 136 to 138, Gln-157, Tyr-171, and Gln-181; these read KSTYAR and TLE. Residue Glu-138 is the Proton donor/acceptor of the active site.

It belongs to the dCTP deaminase family. Homotrimer.

The enzyme catalyses dCTP + H2O + H(+) = dUTP + NH4(+). Its pathway is pyrimidine metabolism; dUMP biosynthesis; dUMP from dCTP (dUTP route): step 1/2. Its function is as follows. Catalyzes the deamination of dCTP to dUTP. This chain is dCTP deaminase, found in Halorhodospira halophila (strain DSM 244 / SL1) (Ectothiorhodospira halophila (strain DSM 244 / SL1)).